Reading from the N-terminus, the 335-residue chain is HTH-type transcriptional regulator RipA (335 aa).

One can recognise an HTH araC/xylS-type domain in the interval 119 to 216 (RKVAQKLIAY…GDTPSSFTSP (98 aa)). 2 DNA-binding regions (H-T-H motif) span residues 136–157 (LEFA…VAST) and 183–206 (IGQV…KRHT).

Under iron limitation, represses the acn (aconitase), catA (catechol 1,2 dioxygenase), leuCD (isopropylmalate dehydratase), narKGHJI (nitrite/nitrate transporter and nitrate reductase), sdhCAB (succinate dehydrogenase), pta (phosphotransacetylase) and katA (catalase) genes. This is HTH-type transcriptional regulator RipA from Corynebacterium diphtheriae (strain ATCC 700971 / NCTC 13129 / Biotype gravis).